Here is a 623-residue protein sequence, read N- to C-terminus: GATA zinc finger domain-containing protein 6 (623 aa).

3 disordered regions span residues 137–156, 167–197, and 245–289; these read IISP…GNNF, INNN…TAST, and PTTT…TAST. The segment covering 167–179 has biased composition (low complexity); that stretch reads INNNSNNNNNNNN. The span at 185–197 shows a compositional bias: polar residues; it reads KQQTSKGSATAST. The segment at 320–345 adopts a GATA-type zinc-finger fold; sequence CHSCGETQTSQWRRGPDGCKSLCNAC. The disordered stretch occupies residues 398–509; the sequence is IQQQQQKDDH…SINHNDKLIN (112 aa). Over residues 410–482 the composition is skewed to low complexity; sequence LSRPSSFSSQ…TSPTISSESL (73 aa). A compositionally biased stretch (polar residues) spans 483–502; sequence NFSSATNTPTNLSPNLQSIN.

The protein is GATA zinc finger domain-containing protein 6 (gtaF) of Dictyostelium discoideum (Social amoeba).